The sequence spans 324 residues: Granaticin polyketide synthase bifunctional cyclase/dehydratase (324 aa).

Residues 1 to 21 are disordered; sequence MVQPAATPVSLPSPTVHRSEH.

The protein operates within antibiotic biosynthesis; granaticin biosynthesis. In terms of biological role, is needed for correct cyclization of the oligoketide leading to isochromanequinone formation. This is Granaticin polyketide synthase bifunctional cyclase/dehydratase (gra-orf4) from Streptomyces violaceoruber.